The sequence spans 463 residues: Cytoplasmic 60S subunit biogenesis factor SPCC550.15c (463 aa).

C2H2-type zinc fingers lie at residues 5-30 and 70-94; these read FACT…DWHH and QNCE…SKKH. The interval 109 to 136 is disordered; that stretch reads KLQSEDASSIASSTLSMGEPVVDSEIEE. The span at 113–124 shows a compositional bias: polar residues; it reads EDASSIASSTLS. Ser150 and Ser155 each carry phosphoserine. The tract at residues 155–189 is disordered; that stretch reads SLHGRESEPSKTELATSIPQSNEASKSHLFTQEPT. The segment covering 167-188 has biased composition (polar residues); it reads ELATSIPQSNEASKSHLFTQEP. C2H2-type zinc fingers lie at residues 208–231 and 259–283; these read RDCL…KASH and FTCL…QKGH. Residues 317–338 show a composition bias toward acidic residues; the sequence is TVVEEDGSSGEGDWEDVSDDSD. Disordered regions lie at residues 317 to 341 and 444 to 463; these read TVVE…DNSS and ANKM…ALLQ.

Belongs to the REI1 family. As to quaternary structure, associates with nascent pre-60S particles that have not yet entered the translating pool, and is released from mature 60S subunits.

The protein localises to the cytoplasm. In terms of biological role, pre-60S-associated factor involved in the cytoplasmic maturation of the 60S subunit. Involved in the dissociation and recycling of other late pre-60S factors before newly synthesized large ribosomal subunits enter translation. This chain is Cytoplasmic 60S subunit biogenesis factor SPCC550.15c, found in Schizosaccharomyces pombe (strain 972 / ATCC 24843) (Fission yeast).